An 81-amino-acid polypeptide reads, in one-letter code: Cytoplasmic envelopment protein 3 (81 aa).

A lipid anchor (N-myristoyl glycine; by host) is attached at G2. Residues 22–23 carry the Di-leucine-like internalization motif motif; the sequence is LV. The tract at residues 41 to 47 is asp/Glu-rich (acidic); sequence DFDENVT. Positions 47-81 are disordered; it reads TEDADKSTQRRPRVIDVTPKRKPSGKSSHSKCAKC. Basic residues predominate over residues 66-81; it reads KRKPSGKSSHSKCAKC.

Belongs to the herpesviridae cytoplasmic envelopment protein 3 family. In terms of assembly, interacts with cytoplasmic envelopment protein 2; this interaction is essential for the proper localization of each protein to the assembly complex and thus for the production of infectious virus. Post-translationally, myristoylation and palmitoylation (probably on one or more of the nearby cysteines at the N-terminus) enable membrane-binding and Golgi apparatus-specific targeting and are essential for efficient packaging. Phosphorylated. Phosphorylation does not seem to be required for recycling to the host Golgi apparatus. Packaging is selective for underphosphorylated forms.

It localises to the virion tegument. The protein localises to the virion membrane. The protein resides in the host cell membrane. It is found in the host Golgi apparatus membrane. Functionally, plays an important role in the cytoplasmic envelopment of tegument proteins and capsids during the assembly and egress processes. Also participates in viral entry at the fusion step probably by regulating the core fusion machinery. In Homo sapiens (Human), this protein is Cytoplasmic envelopment protein 3.